Consider the following 242-residue polypeptide: 1-(5-phosphoribosyl)-5-[(5-phosphoribosylamino)methylideneamino] imidazole-4-carboxamide isomerase (242 aa).

The Proton acceptor role is filled by aspartate 8. Aspartate 129 serves as the catalytic Proton donor.

The protein belongs to the HisA/HisF family.

The protein resides in the cytoplasm. It catalyses the reaction 1-(5-phospho-beta-D-ribosyl)-5-[(5-phospho-beta-D-ribosylamino)methylideneamino]imidazole-4-carboxamide = 5-[(5-phospho-1-deoxy-D-ribulos-1-ylimino)methylamino]-1-(5-phospho-beta-D-ribosyl)imidazole-4-carboxamide. It functions in the pathway amino-acid biosynthesis; L-histidine biosynthesis; L-histidine from 5-phospho-alpha-D-ribose 1-diphosphate: step 4/9. The polypeptide is 1-(5-phosphoribosyl)-5-[(5-phosphoribosylamino)methylideneamino] imidazole-4-carboxamide isomerase (Erythrobacter litoralis (strain HTCC2594)).